Consider the following 255-residue polypeptide: Hydroxyacylglutathione hydrolase (255 aa).

Positions 56, 58, 60, 61, 114, 133, and 171 each coordinate Zn(2+).

The protein belongs to the metallo-beta-lactamase superfamily. Glyoxalase II family. Monomer. Requires Zn(2+) as cofactor.

The catalysed reaction is an S-(2-hydroxyacyl)glutathione + H2O = a 2-hydroxy carboxylate + glutathione + H(+). It participates in secondary metabolite metabolism; methylglyoxal degradation; (R)-lactate from methylglyoxal: step 2/2. Thiolesterase that catalyzes the hydrolysis of S-D-lactoyl-glutathione to form glutathione and D-lactic acid. The sequence is that of Hydroxyacylglutathione hydrolase from Rhodopseudomonas palustris (strain BisA53).